The sequence spans 502 residues: Galactose/methyl galactoside import ATP-binding protein MglA (502 aa).

ABC transporter domains lie at 10–245 and 255–502; these read LEMT…VGRE and NEPK…SRYL. Position 42 to 49 (42 to 49) interacts with ATP; the sequence is GENGAGKS.

This sequence belongs to the ABC transporter superfamily. Galactose/methyl galactoside importer (TC 3.A.1.2.3) family. As to quaternary structure, the complex is composed of one ATP-binding protein (MglA), two transmembrane proteins (MglC) and a solute-binding protein (MglB).

It is found in the cell inner membrane. The enzyme catalyses D-galactose(out) + ATP + H2O = D-galactose(in) + ADP + phosphate + H(+). It catalyses the reaction methyl beta-D-galactoside(out) + ATP + H2O = methyl beta-D-galactoside(in) + ADP + phosphate + H(+). Functionally, part of the ABC transporter complex MglABC involved in galactose/methyl galactoside import. Responsible for energy coupling to the transport system. This chain is Galactose/methyl galactoside import ATP-binding protein MglA, found in Vibrio cholerae serotype O1 (strain ATCC 39315 / El Tor Inaba N16961).